A 525-amino-acid chain; its full sequence is MSNIHDHKILILDFGSQYTQLIARRIREIGVYCELWAWDVSEEQIKAFAPNGIILAGGPESVTADNSPRAPEYVFNAGVPVLGICYGMQTMSEQLGGKVIQGVGEGEFGYAQVEVQAASELFKSIEDAVSDSGKALLDVWMSHGDKVSEIPEGFVTVAKTDTCPYAAMANEEKRFYGVQFHPEVTHTRQGKRMLEHFALDICQCEANWKPSSIIEDAVARIKEQVGDDEVILGLSGGVDSSVVAMLLHRAIGSKLTCVFVDNGLLRLNEADQVLEMFGDHFGLNIVHVDAESRFLDALAGEAEPEAKRKIIGKVFVDIFDEESRKCVNAKWLAQGTIYPDVIESAGSATGKAHVIKSHHNVGGLPDDMELGLVEPLRELFKDEVRKIGLELGLPYNMLYRHPFPGPGLGVRVLGEVKKEYCDLLRRADAIFIEELHKADLYNKVSQAFTVFLPVRSVGVMGDGRKYDWVVSLRAVETIDFMTAHWAHLPYDFLGRVSNRIINEIDGISRVVYDISGKPPATIEWE.

One can recognise a Glutamine amidotransferase type-1 domain in the interval 8–207 (KILILDFGSQ…ALDICQCEAN (200 aa)). Cys85 serves as the catalytic Nucleophile. Catalysis depends on residues His181 and Glu183. Residues 208-400 (WKPSSIIEDA…LGLPYNMLYR (193 aa)) enclose the GMPS ATP-PPase domain. 235-241 (SGGVDSS) contributes to the ATP binding site.

As to quaternary structure, homodimer.

The enzyme catalyses XMP + L-glutamine + ATP + H2O = GMP + L-glutamate + AMP + diphosphate + 2 H(+). Its pathway is purine metabolism; GMP biosynthesis; GMP from XMP (L-Gln route): step 1/1. Catalyzes the synthesis of GMP from XMP. The protein is GMP synthase [glutamine-hydrolyzing] of Shewanella loihica (strain ATCC BAA-1088 / PV-4).